A 156-amino-acid polypeptide reads, in one-letter code: Small ribosomal subunit protein uS7A/uS7B (156 aa).

This sequence belongs to the universal ribosomal protein uS7 family. As to quaternary structure, part of the 30S ribosomal subunit. Contacts proteins S9 and S11.

In terms of biological role, one of the primary rRNA binding proteins, it binds directly to 16S rRNA where it nucleates assembly of the head domain of the 30S subunit. Is located at the subunit interface close to the decoding center, probably blocks exit of the E-site tRNA. The chain is Small ribosomal subunit protein uS7A/uS7B from Cereibacter sphaeroides (strain ATCC 17029 / ATH 2.4.9) (Rhodobacter sphaeroides).